Reading from the N-terminus, the 305-residue chain is Serine/threonine-protein phosphatase 4 catalytic subunit (305 aa).

4 residues coordinate Mn(2+): D52, H54, D80, and N112. H113 functions as the Proton donor in the catalytic mechanism. Positions 162 and 236 each coordinate Mn(2+).

It belongs to the PPP phosphatase family. PP-4 (PP-X) subfamily. As to quaternary structure, serine/threonine-protein phosphatase 4 (PP4) occurs in different assemblies of the catalytic and one or more regulatory subunits. Probably part of a PP4 complex containing ppp4c and ppp4r2. Interacts with smkA. Mn(2+) is required as a cofactor.

It is found in the cytoplasm. The protein resides in the nucleus. The enzyme catalyses O-phospho-L-seryl-[protein] + H2O = L-seryl-[protein] + phosphate. It carries out the reaction O-phospho-L-threonyl-[protein] + H2O = L-threonyl-[protein] + phosphate. Its function is as follows. Required for development, chemotaxis and the expression of numerous genes. This Dictyostelium discoideum (Social amoeba) protein is Serine/threonine-protein phosphatase 4 catalytic subunit (ppp4c).